Reading from the N-terminus, the 185-residue chain is Adenine phosphoribosyltransferase (185 aa).

The protein belongs to the purine/pyrimidine phosphoribosyltransferase family. As to quaternary structure, homodimer.

The protein resides in the cytoplasm. The catalysed reaction is AMP + diphosphate = 5-phospho-alpha-D-ribose 1-diphosphate + adenine. It functions in the pathway purine metabolism; AMP biosynthesis via salvage pathway; AMP from adenine: step 1/1. Functionally, catalyzes a salvage reaction resulting in the formation of AMP, that is energically less costly than de novo synthesis. In Rubrobacter xylanophilus (strain DSM 9941 / JCM 11954 / NBRC 16129 / PRD-1), this protein is Adenine phosphoribosyltransferase.